The sequence spans 120 residues: Chaperonin GroEL (120 aa).

23–27 (DGTTT) is a binding site for ATP.

It belongs to the chaperonin (HSP60) family. In terms of assembly, forms a cylinder of 14 subunits composed of two heptameric rings stacked back-to-back. Interacts with the co-chaperonin GroES.

Its subcellular location is the cytoplasm. The enzyme catalyses ATP + H2O + a folded polypeptide = ADP + phosphate + an unfolded polypeptide.. In terms of biological role, together with its co-chaperonin GroES, plays an essential role in assisting protein folding. The GroEL-GroES system forms a nano-cage that allows encapsulation of the non-native substrate proteins and provides a physical environment optimized to promote and accelerate protein folding. This is Chaperonin GroEL from Mycobacterium gordonae.